The following is a 314-amino-acid chain: Replication initiation protein (314 aa).

It belongs to the plasmid replication initiation factor family.

Functionally, this protein is probably a specific topoisomerase involved in initiating replication. This protein is specifically required and may be rate-limiting for replication of the plasmid in vivo. The sequence is that of Replication initiation protein (repC) from Staphylococcus aureus.